The sequence spans 780 residues: Catenin beta-1 (780 aa).

Residues 34–56 (GIHSGATTTAPSLSGKGNPEDDD) are disordered. 10 ARM repeats span residues 140–179 (NYQDDAELATRAIPELTKLLNDEDQVVVNKAAVMVHQLSK), 224–263 (REGLLAIFKSGGIPALVKMLGSPVDSVLFYAITTLHNLLL), 266–305 (EGAKMAVRLAGGLQKMVALLNKTNVKFLAITTDCLQILAY), 350–389 (SSNKPAIVEAGGMQALGLHLTDPSQRLVQNCLWTLRNLSD), 399–430 (GLLGTLVQLLGSDDINVVTCAAGILSNLTCNN), 431–472 (YKNK…HLTS), 478–518 (EMAQ…NLAL), 520–561 (PANH…QFVE), 583–622 (IHNRIVIRGLNTIPLFVQLLYSPIENIQRVAAGVLCELAQ), and 624–663 (KEAAEAIEAEGATAPLTELLHSRNEGVATYAAAVLFRMSE). The segment covering 735–744 (EHEMAGHHPG) has biased composition (basic and acidic residues). The tract at residues 735–770 (EHEMAGHHPGPDYPVDGLPDLGHTQDLIDGLPPGDS) is disordered.

The protein belongs to the beta-catenin family. In terms of assembly, interacts with adnpa. Interacts with cdh1 during oogenesis and in the unfertilized egg. Interacts with ctnna1 and cdh2. In terms of processing, phosphorylation by gsk3b promotes ubiquitination and subsequent degradation by the proteasome. Post-translationally, ubiquitinated when phosphorylated by gsk3b, leading to its degradation. Expressed in the successional lamina, also expressed in both the epithelial and mesenchymal cells of the developing replacement tooth (at protein level). Expressed in the enamel organ as well as in the inner and outer dental epithelium during replacement tooth morphogenesis (at protein level). Expressed in the differentiated, polarized odontoblasts that line the dentine matrix as well as in the inner and outer dental epithelium during tooth cytodifferentiation (at protein level). Expressed in the reduced enamel organ, odontoblasts and weakly at the center of the dental papilla of the functional tooth as well as in the epithelial crypts surrounding the functional tooth (at protein level). Expressed in the liver (at protein level). Expressed at intercalated disks in the heart (at protein level). Expressed in the ovary.

The protein resides in the cytoplasm. It is found in the nucleus. It localises to the cell membrane. Its subcellular location is the cell junction. The protein localises to the adherens junction. Functionally, key downstream component of the canonical Wnt signaling pathway. In the absence of Wnt, forms a complex with axin1, axin2, apc, csnk1a1 and gsk3b that promotes phosphorylation on N-terminal Ser and Thr residues and ubiquitination of ctnnb1 and its subsequent degradation by the proteasome. In the presence of Wnt ligand, ctnnb1 is not ubiquitinated and accumulates in the nucleus, where it acts as a coactivator for transcription factors of the TCF/LEF family, leading to activate Wnt responsive genes. Plays a key role in dorsoventral patterning: in prospective ventral blastomeres, its down-regulation by axin1 and axin2 leads to inhibit the Wnt signaling pathway, while in prospective dorsal blastomeres, degradation of axin results in stabilization and nuclear translocation of ctnnb1. The chain is Catenin beta-1 from Danio rerio (Zebrafish).